Here is a 436-residue protein sequence, read N- to C-terminus: GDP-mannose 6-dehydrogenase (436 aa).

NAD(+)-binding residues include Y10, V11, D30, K35, T86, and T124. The GDP-alpha-D-mannuronate site is built by E161, K210, N214, H217, N225, Y256, Y257, R259, and G265. C268 is an active-site residue. Residue K271 coordinates NAD(+). K324 is a binding site for GDP-alpha-D-mannuronate. R331 is an NAD(+) binding site.

The protein belongs to the UDP-glucose/GDP-mannose dehydrogenase family.

It catalyses the reaction GDP-alpha-D-mannose + 2 NAD(+) + H2O = GDP-alpha-D-mannuronate + 2 NADH + 3 H(+). The protein operates within glycan biosynthesis; alginate biosynthesis. In terms of biological role, catalyzes the oxidation of guanosine diphospho-D-mannose (GDP-D-mannose) to GDP-D-mannuronic acid, a precursor for alginate polymerization. The alginate layer causes a mucoid phenotype and is essential for cyst formation. The protein is GDP-mannose 6-dehydrogenase (algD) of Azotobacter vinelandii.